Reading from the N-terminus, the 666-residue chain is Protein-arginine deiminase type-4 (666 aa).

6 residues coordinate Ca(2+): Asn-153, Asp-155, Asp-165, Asp-168, Asp-176, and Asp-179. Arg-212 and Arg-218 each carry citrulline. Gln-349 serves as a coordination point for Ca(2+). Residue Asp-350 is part of the active site. Glu-351, Glu-353, Asp-369, and Ser-370 together coordinate Ca(2+). Citrulline is present on residues Arg-372, Arg-374, and Arg-383. Residue Arg-374 coordinates substrate. Ca(2+) is bound by residues Phe-407, Leu-410, and Glu-411. Catalysis depends on residues His-471, Asp-473, and Cys-648.

Belongs to the protein arginine deiminase family. Ca(2+) serves as cofactor. In terms of processing, autocitrullination at Arg-372 and Arg-374 inactivates the enzyme. Epidermis.

The protein localises to the cytoplasm. Its subcellular location is the nucleus. It is found in the cytoplasmic granule. It catalyses the reaction L-arginyl-[protein] + H2O = L-citrullyl-[protein] + NH4(+). Functionally, catalyzes the citrullination/deimination of arginine residues of proteins such as histones, thereby playing a key role in histone code and regulation of stem cell maintenance. Citrullinates histone H1 at 'Arg-54' (to form H1R54ci), histone H3 at 'Arg-2', 'Arg-8', 'Arg-17' and/or 'Arg-26' (to form H3R2ci, H3R8ci, H3R17ci, H3R26ci, respectively) and histone H4 at 'Arg-3' (to form H4R3ci). Acts as a key regulator of stem cell maintenance by mediating citrullination of histone H1: citrullination of 'Arg-54' of histone H1 (H1R54ci) results in H1 displacement from chromatin and global chromatin decondensation, thereby promoting pluripotency and stem cell maintenance. Promotes profound chromatin decondensation during the innate immune response to infection in neutrophils by mediating formation of H1R54ci. Required for the formation of neutrophil extracellular traps (NETs); NETs are mainly composed of DNA fibers and are released by neutrophils to bind pathogens during inflammation. Citrullination of histone H3 prevents their methylation by CARM1 and HRMT1L2/PRMT1 and represses transcription. Citrullinates EP300/P300 at 'Arg-2142', which favors its interaction with NCOA2/GRIP1. This is Protein-arginine deiminase type-4 (Padi4) from Rattus norvegicus (Rat).